We begin with the raw amino-acid sequence, 240 residues long: Uridylate kinase (240 aa).

Residue 13 to 16 coordinates ATP; sequence KFSG. G55 is a binding site for UMP. The ATP site is built by G56 and R60. UMP contacts are provided by residues D76 and 137-144; that span reads TGNPFFTT. Residues T164, Y170, and D173 each coordinate ATP.

Belongs to the UMP kinase family. As to quaternary structure, homohexamer.

Its subcellular location is the cytoplasm. It catalyses the reaction UMP + ATP = UDP + ADP. It participates in pyrimidine metabolism; CTP biosynthesis via de novo pathway; UDP from UMP (UMPK route): step 1/1. Inhibited by UTP. Functionally, catalyzes the reversible phosphorylation of UMP to UDP. This is Uridylate kinase from Helicobacter acinonychis (strain Sheeba).